We begin with the raw amino-acid sequence, 451 residues long: Tubulin alpha chain (451 aa).

Gln-11 lines the GTP pocket. Residue Lys-40 is modified to N6-acetyllysine. 6 residues coordinate GTP: Glu-71, Gly-144, Thr-145, Thr-179, Asn-206, and Asn-228. Glu-71 contacts Mg(2+). Residue Glu-254 is part of the active site.

It belongs to the tubulin family. As to quaternary structure, dimer of alpha and beta chains. A typical microtubule is a hollow water-filled tube with an outer diameter of 25 nm and an inner diameter of 15 nM. Alpha-beta heterodimers associate head-to-tail to form protofilaments running lengthwise along the microtubule wall with the beta-tubulin subunit facing the microtubule plus end conferring a structural polarity. Microtubules usually have 13 protofilaments but different protofilament numbers can be found in some organisms and specialized cells. Requires Mg(2+) as cofactor. In terms of processing, undergoes a tyrosination/detyrosination cycle, the cyclic removal and re-addition of a C-terminal tyrosine residue by the enzymes tubulin tyrosine carboxypeptidase (TTCP) and tubulin tyrosine ligase (TTL), respectively. Post-translationally, acetylation of alpha chains at Lys-40 stabilizes microtubules and affects affinity and processivity of microtubule motors. This modification has a role in multiple cellular functions, ranging from cell motility, cell cycle progression or cell differentiation to intracellular trafficking and signaling.

Its subcellular location is the cytoplasm. The protein localises to the cytoskeleton. It carries out the reaction GTP + H2O = GDP + phosphate + H(+). Functionally, tubulin is the major constituent of microtubules, a cylinder consisting of laterally associated linear protofilaments composed of alpha- and beta-tubulin heterodimers. Microtubules grow by the addition of GTP-tubulin dimers to the microtubule end, where a stabilizing cap forms. Below the cap, tubulin dimers are in GDP-bound state, owing to GTPase activity of alpha-tubulin. This is Tubulin alpha chain from Trypanosoma cruzi.